The following is a 1044-amino-acid chain: Elongation factor 3A (1044 aa).

Serine 2 is modified (N-acetylserine). The stretch at 5 to 42 is one HEAT 1 repeat; that stretch reads QQSIKVLEELFQKLSVATADNRHEIASEVASFLNGNII. ADP contacts are provided by isoleucine 42, histidine 44, and serine 83. 6 HEAT repeats span residues 86–123, 125–162, 166–203, 205–241, 242–279, and 285–323; these read PYIV…AVNP, AIKA…AAKD, LRMP…TVDN, DIER…EVTP, ATLS…LVED, and PFLG…VGNV. Lysine 187 and lysine 196 each carry N6,N6,N6-trimethyllysine. Lysine 350 is covalently cross-linked (Glycyl lysine isopeptide (Lys-Gly) (interchain with G-Cter in ubiquitin)). Residues threonine 392, histidine 396, and glutamate 397 each coordinate ADP. The 216-residue stretch at 426–641 folds into the ABC transporter 1 domain; the sequence is DEGEDLCNCE…CPAAKAYEEL (216 aa). Lysine 636 is covalently cross-linked (Glycyl lysine isopeptide (Lys-Gly) (interchain with G-Cter in ubiquitin)). At serine 642 the chain carries Phosphoserine. Positions 667–993 constitute an ABC transporter 2 domain; sequence VKVTNMEFQY…AGPRIEKKED (327 aa). An ADP-binding site is contributed by asparagine 703. N6,N6,N6-trimethyllysine is present on lysine 789. The ADP site is built by glutamate 922, asparagine 925, and histidine 951. Phosphothreonine is present on threonine 972. The residue at position 974 (serine 974) is a Phosphoserine. The tract at residues 974–1044 is disordered; it reads SGHNWVSGQG…DAYVSSDEEF (71 aa). The span at 1007–1031 shows a compositional bias: basic residues; it reads GGKKKKKLSSAELRKKKKERMKKKK. 2 positions are modified to phosphoserine: serine 1039 and serine 1040.

The protein belongs to the ABC transporter superfamily. ABCF family. EF3 subfamily. As to quaternary structure, monomer. Interacts with elongation factor 1A (eEF1A). Interacts through its N-terminus with 18S rRNA. Associates with ribosomes; preferentially binds ribosomes in the post-translocational state (bearing a peptidyl-tRNA in the P-site) in the presence of ATP, suggesting that ATP hydrolysis is required for ribosome dissociation.

The protein localises to the cytoplasm. It is found in the cytosol. It catalyses the reaction ATP + H2O = ADP + phosphate + H(+). Its pathway is protein biosynthesis; polypeptide chain elongation. Inhibited by the translational inhibitors neomycin and alpha-sarcin, which suppress the ATPase activity. Its function is as follows. Ribosome-dependent ATPase that functions in cytoplasmic translation elongation. Required for the ATP-dependent release of deacylated tRNA from the ribosomal E-site during protein biosynthesis. Stimulates the eEF1A-dependent binding of aminoacyl-tRNA to the ribosomal A-site, which has reduced affinity for tRNA as long as the E-site is occupied. Assists translation termination by stimulating the release of nascent protein from the ribosome by release factors. In nutrient-replete conditions, occupies the space on the ribosome bound by GCN1 during amino acid starvation conditions, and therefore indirectly negatively regulates GCN2 kinase activity in replete conditions. The sequence is that of Elongation factor 3A (YEF3) from Saccharomyces cerevisiae (strain ATCC 204508 / S288c) (Baker's yeast).